The following is a 31-amino-acid chain: Photosystem II reaction center protein T (31 aa).

A helical membrane pass occupies residues 3–23 (SAAYILVLALALGVIFFAIAF).

This sequence belongs to the PsbT family. In terms of assembly, PSII is composed of 1 copy each of membrane proteins PsbA, PsbB, PsbC, PsbD, PsbE, PsbF, PsbH, PsbI, PsbJ, PsbK, PsbL, PsbM, PsbT, PsbX, PsbY, PsbZ, Psb30/Ycf12, peripheral proteins PsbO, CyanoQ (PsbQ), PsbU, PsbV and a large number of cofactors. It forms dimeric complexes.

Its subcellular location is the cellular thylakoid membrane. Functionally, found at the monomer-monomer interface of the photosystem II (PS II) dimer, plays a role in assembly and dimerization of PSII. PSII is a light-driven water plastoquinone oxidoreductase, using light energy to abstract electrons from H(2)O, generating a proton gradient subsequently used for ATP formation. This is Photosystem II reaction center protein T from Trichodesmium erythraeum (strain IMS101).